A 175-amino-acid polypeptide reads, in one-letter code: GLLGLGYGGYGYGAALAAPAAVSYAAPAIAAAPAVSYAAPAIAAAPAVSYAAPAIAAAPAISYAAPAIAAAPAVSYAAPAIAAAPAISYAAAPAIRYAAAPAIRYAAPAVARVAPAISYAAVAVARVAPALSYAAPALSYARYAAPALSYAAPAVSYAAPAISYAAPAIAKYALH.

19 consecutive repeat copies span residues 17 to 20 (AAPA), 25 to 28 (AAPA), 31 to 34 (AAPA), 38 to 41 (AAPA), 44 to 47 (AAPA), 51 to 54 (AAPA), 57 to 60 (AAPA), 64 to 67 (AAPA), 70 to 73 (AAPA), 77 to 80 (AAPA), 83 to 86 (AAPA), 91 to 94 (AAPA), 99 to 102 (AAPA), 106 to 109 (AAPA), 134 to 137 (AAPA), 144 to 147 (AAPA), 151 to 154 (AAPA), 158 to 161 (AAPA), and 165 to 168 (AAPA).

In terms of biological role, component of the cuticle of migratory locust which contains more than 100 different structural proteins. The polypeptide is Cuticle protein 16.5, isoform A (Locusta migratoria (Migratory locust)).